We begin with the raw amino-acid sequence, 463 residues long: L-seryl-tRNA(Sec) selenium transferase (463 aa).

Lys295 carries the post-translational modification N6-(pyridoxal phosphate)lysine.

This sequence belongs to the SelA family. As to quaternary structure, homodecamer; pentamer of dimers. Binds only one seryl-tRNA(Sec) per dimer. Pyridoxal 5'-phosphate is required as a cofactor.

The protein resides in the cytoplasm. It carries out the reaction L-seryl-tRNA(Sec) + selenophosphate + H(+) = L-selenocysteinyl-tRNA(Sec) + phosphate. The protein operates within aminoacyl-tRNA biosynthesis; selenocysteinyl-tRNA(Sec) biosynthesis; selenocysteinyl-tRNA(Sec) from L-seryl-tRNA(Sec) (bacterial route): step 1/1. In terms of biological role, converts seryl-tRNA(Sec) to selenocysteinyl-tRNA(Sec) required for selenoprotein biosynthesis. The protein is L-seryl-tRNA(Sec) selenium transferase of Escherichia coli O81 (strain ED1a).